The following is a 226-amino-acid chain: 7-cyano-7-deazaguanine synthase (226 aa).

8–18 (ISGGLDSTTCL) contacts ATP. Zn(2+)-binding residues include C188, C198, C201, and C204.

This sequence belongs to the QueC family. Zn(2+) is required as a cofactor.

It carries out the reaction 7-carboxy-7-deazaguanine + NH4(+) + ATP = 7-cyano-7-deazaguanine + ADP + phosphate + H2O + H(+). Its pathway is purine metabolism; 7-cyano-7-deazaguanine biosynthesis. In terms of biological role, catalyzes the ATP-dependent conversion of 7-carboxy-7-deazaguanine (CDG) to 7-cyano-7-deazaguanine (preQ(0)). The sequence is that of 7-cyano-7-deazaguanine synthase from Coxiella burnetii (strain Dugway 5J108-111).